A 402-amino-acid chain; its full sequence is N-acetyllactosaminide beta-1,6-N-acetylglucosaminyl-transferase (402 aa).

Topologically, residues 1–7 (MMGSWKH) are cytoplasmic. The helical; Signal-anchor for type II membrane protein transmembrane segment at 8-23 (CLFSASLISALIFVFV) threads the bilayer. Residues 24-400 (YNTELWENKR…QSETAIQPSW (377 aa)) lie on the Lumenal side of the membrane. N-linked (GlcNAc...) asparagine glycosylation is present at N41.

The protein belongs to the glycosyltransferase 14 family. As to expression, expressed in lens epithelium cells. Expressed in reticulocytes.

Its subcellular location is the golgi apparatus membrane. The catalysed reaction is a beta-D-Gal-(1-&gt;4)-beta-D-GlcNAc-(1-&gt;3)-beta-D-Gal-(1-&gt;4)-beta-D-GlcNAc derivative + UDP-N-acetyl-alpha-D-glucosamine = a beta-D-Gal-(1-&gt;4)-beta-D-GlcNAc-(1-&gt;3)-[beta-D-GlcNAc-(1-&gt;6)]-beta-D-Gal-(1-&gt;4)-N-acetyl-beta-D-glucosaminyl derivative + UDP + H(+). Its pathway is protein modification; protein glycosylation. Functionally, branching enzyme that converts linear into branched poly-N-acetyllactosaminoglycans. Introduces the blood group I antigen during embryonic development. It is closely associated with the development and maturation of erythroid cells. Determines the expression of the blood group I antigen in erythrocytes. The sequence is that of N-acetyllactosaminide beta-1,6-N-acetylglucosaminyl-transferase (GCNT2) from Homo sapiens (Human).